The sequence spans 310 residues: Homocysteine S-methyltransferase (310 aa).

In terms of domain architecture, Hcy-binding spans 1–310 (MSQNNPLRAL…ADIAALKARS (310 aa)). Zn(2+) contacts are provided by Cys-229, Cys-295, and Cys-296.

Monomer. Zn(2+) serves as cofactor.

It carries out the reaction S-methyl-L-methionine + L-homocysteine = 2 L-methionine + H(+). Its function is as follows. Catalyzes methyl transfer from S-methylmethionine or S-adenosylmethionine (less efficient) to homocysteine, selenohomocysteine and less efficiently selenocysteine. The chain is Homocysteine S-methyltransferase (mmuM) from Escherichia coli (strain K12).